Here is a 418-residue protein sequence, read N- to C-terminus: Tubulin alpha chain (418 aa).

Glutamine 11, glutamate 71, serine 140, glycine 144, threonine 179, asparagine 206, and asparagine 228 together coordinate GTP. Glutamate 71 contacts Mg(2+). The active site involves glutamate 255.

The protein belongs to the tubulin family. In terms of assembly, dimer of alpha and beta chains. A typical microtubule is a hollow water-filled tube with an outer diameter of 25 nm and an inner diameter of 15 nM. Alpha-beta heterodimers associate head-to-tail to form protofilaments running lengthwise along the microtubule wall with the beta-tubulin subunit facing the microtubule plus end conferring a structural polarity. Microtubules usually have 13 protofilaments but different protofilament numbers can be found in some organisms and specialized cells. Mg(2+) serves as cofactor.

Its subcellular location is the cytoplasm. The protein resides in the cytoskeleton. The catalysed reaction is GTP + H2O = GDP + phosphate + H(+). In terms of biological role, tubulin is the major constituent of microtubules, a cylinder consisting of laterally associated linear protofilaments composed of alpha- and beta-tubulin heterodimers. Microtubules grow by the addition of GTP-tubulin dimers to the microtubule end, where a stabilizing cap forms. Below the cap, tubulin dimers are in GDP-bound state, owing to GTPase activity of alpha-tubulin. The protein is Tubulin alpha chain (TUB1) of Ajellomyces capsulatus (Darling's disease fungus).